The sequence spans 346 residues: MELAPVRHNWTHSEVKAIFEMPFNDLLFKAASVHRANFNPNEVQISTLLSIKTGACPEDCKYCPQSGHYRTDLERERLIEVEKVVEQARLAKQKGATRFCMGAAWSDPKDRDMPYISQMVKEVKELGLETCMTLGMLNNEKAHELRNAGLDYYNHNLDTSPEYYEQIISTRTFQDRLDTIGNVRDAGMKVCSGGIVGMGEQAADRYGLLMQLANLDQQPESVPINMLVKVKGTPLENVDDLDHFEFIRTIATARIMMPHSYVRLSAGRNAMNEQMQSMCFFAGANSIFYGDKLLTTENPDADADMALIKKLGMNPETRHDYSDEAVAASLSSQVADKATSKLFYEA.

A Radical SAM core domain is found at 41–265 (NEVQISTLLS…MMPHSYVRLS (225 aa)). Cys56, Cys60, and Cys63 together coordinate [4Fe-4S] cluster. Cys100, Cys131, Cys191, and Arg263 together coordinate [2Fe-2S] cluster.

This sequence belongs to the radical SAM superfamily. Biotin synthase family. Homodimer. [4Fe-4S] cluster serves as cofactor. The cofactor is [2Fe-2S] cluster.

The enzyme catalyses (4R,5S)-dethiobiotin + (sulfur carrier)-SH + 2 reduced [2Fe-2S]-[ferredoxin] + 2 S-adenosyl-L-methionine = (sulfur carrier)-H + biotin + 2 5'-deoxyadenosine + 2 L-methionine + 2 oxidized [2Fe-2S]-[ferredoxin]. Its pathway is cofactor biosynthesis; biotin biosynthesis; biotin from 7,8-diaminononanoate: step 2/2. Functionally, catalyzes the conversion of dethiobiotin (DTB) to biotin by the insertion of a sulfur atom into dethiobiotin via a radical-based mechanism. The protein is Biotin synthase of Pseudoalteromonas translucida (strain TAC 125).